Consider the following 471-residue polypeptide: Tyrosine--tRNA ligase (471 aa).

Y41 lines the L-tyrosine pocket. The 'HIGH' region motif lies at 46 to 55 (PTAPSLHVGN). The L-tyrosine site is built by Y176 and Q180. The 'KMSKS' region motif lies at 236 to 240 (KFGKT). K239 contacts ATP. An S4 RNA-binding domain is found at 403 to 471 (DLITHILQKV…GKKHLAAVFY (69 aa)).

Belongs to the class-I aminoacyl-tRNA synthetase family. TyrS type 1 subfamily. Homodimer.

The protein resides in the cytoplasm. It catalyses the reaction tRNA(Tyr) + L-tyrosine + ATP = L-tyrosyl-tRNA(Tyr) + AMP + diphosphate + H(+). Its function is as follows. Catalyzes the attachment of tyrosine to tRNA(Tyr) in a two-step reaction: tyrosine is first activated by ATP to form Tyr-AMP and then transferred to the acceptor end of tRNA(Tyr). This is Tyrosine--tRNA ligase from Tropheryma whipplei (strain Twist) (Whipple's bacillus).